Reading from the N-terminus, the 514-residue chain is tRNA-2-methylthio-N(6)-dimethylallyladenosine synthase (514 aa).

Residues 1–21 (MNEEQRKASSVDVLAERDKKA) are disordered. The region spanning 68–186 (RTFLIKTYGC…LPEILEEAYL (119 aa)) is the MTTase N-terminal domain. [4Fe-4S] cluster is bound by residues cysteine 77, cysteine 113, cysteine 147, cysteine 223, cysteine 227, and cysteine 230. One can recognise a Radical SAM core domain in the interval 209–440 (REGNIKAWVN…KKVGHYSQIA (232 aa)). A TRAM domain is found at 442 to 505 (SKYEGQTVTV…QYSLNGSFVK (64 aa)).

The protein belongs to the methylthiotransferase family. MiaB subfamily. Monomer. It depends on [4Fe-4S] cluster as a cofactor.

The protein resides in the cytoplasm. It carries out the reaction N(6)-dimethylallyladenosine(37) in tRNA + (sulfur carrier)-SH + AH2 + 2 S-adenosyl-L-methionine = 2-methylsulfanyl-N(6)-dimethylallyladenosine(37) in tRNA + (sulfur carrier)-H + 5'-deoxyadenosine + L-methionine + A + S-adenosyl-L-homocysteine + 2 H(+). Functionally, catalyzes the methylthiolation of N6-(dimethylallyl)adenosine (i(6)A), leading to the formation of 2-methylthio-N6-(dimethylallyl)adenosine (ms(2)i(6)A) at position 37 in tRNAs that read codons beginning with uridine. The protein is tRNA-2-methylthio-N(6)-dimethylallyladenosine synthase of Staphylococcus aureus (strain N315).